Here is a 209-residue protein sequence, read N- to C-terminus: Ribosomal RNA large subunit methyltransferase E (209 aa).

5 residues coordinate S-adenosyl-L-methionine: glycine 63, tryptophan 65, aspartate 83, aspartate 99, and aspartate 124. Lysine 164 acts as the Proton acceptor in catalysis.

Belongs to the class I-like SAM-binding methyltransferase superfamily. RNA methyltransferase RlmE family.

Its subcellular location is the cytoplasm. It carries out the reaction uridine(2552) in 23S rRNA + S-adenosyl-L-methionine = 2'-O-methyluridine(2552) in 23S rRNA + S-adenosyl-L-homocysteine + H(+). Specifically methylates the uridine in position 2552 of 23S rRNA at the 2'-O position of the ribose in the fully assembled 50S ribosomal subunit. This Vibrio cholerae serotype O1 (strain ATCC 39541 / Classical Ogawa 395 / O395) protein is Ribosomal RNA large subunit methyltransferase E.